The following is a 92-amino-acid chain: MIIDLVKRPVITEKATRILEKNQYTFDVELSLTKPKIKALIEKAFKVEVVSVNTHRPPRRKRRLGTTQGYLPRYKRAIITLKRGFMIPLTPF.

It belongs to the universal ribosomal protein uL23 family. Part of the 50S ribosomal subunit.

The protein resides in the plastid. It is found in the chloroplast. Functionally, binds to 23S rRNA. This chain is Large ribosomal subunit protein uL23c (rpl23), found in Nephroselmis olivacea (Green alga).